Consider the following 269-residue polypeptide: Ribosomal RNA small subunit methyltransferase J (269 aa).

S-adenosyl-L-methionine is bound by residues 124–125 (ER) and aspartate 188.

It belongs to the methyltransferase superfamily. RsmJ family.

The protein localises to the cytoplasm. The catalysed reaction is guanosine(1516) in 16S rRNA + S-adenosyl-L-methionine = N(2)-methylguanosine(1516) in 16S rRNA + S-adenosyl-L-homocysteine + H(+). In terms of biological role, specifically methylates the guanosine in position 1516 of 16S rRNA. The chain is Ribosomal RNA small subunit methyltransferase J from Saccharophagus degradans (strain 2-40 / ATCC 43961 / DSM 17024).